We begin with the raw amino-acid sequence, 333 residues long: Protein 2 (333 aa).

2 disordered regions span residues 1-41 and 57-84; these read MTGR…SENA and LGAGNDYDETEADPADTYGDTEADLPPT. The span at 24–33 shows a compositional bias: polar residues; that stretch reads QETTKQTTSA. Acidic residues predominate over residues 62–79; the sequence is DYDETEADPADTYGDTEA.

The polypeptide is Protein 2 (Lactuca sativa (Garden lettuce)).